Reading from the N-terminus, the 353-residue chain is Photosystem II D2 protein (353 aa).

The residue at position 2 (threonine 2) is an N-acetylthreonine. The residue at position 2 (threonine 2) is a Phosphothreonine. The helical transmembrane segment at 41-61 (CAYFALGGWFTGTTFVTSWYT) threads the bilayer. Histidine 118 serves as a coordination point for chlorophyll a. The chain crosses the membrane as a helical span at residues 125–141 (GFMLRQFELARSVQLRP). Positions 130 and 143 each coordinate pheophytin a. A helical membrane pass occupies residues 153 to 166 (VFVSVFLIYPLGQS). Histidine 198 provides a ligand contact to chlorophyll a. A helical transmembrane segment spans residues 208-228 (AALLCAIHGATVENTLFEDGD). A plastoquinone is bound by residues histidine 215 and phenylalanine 262. Fe cation is bound at residue histidine 215. Fe cation is bound at residue histidine 269. The helical transmembrane segment at 279-295 (GLWMSAIGVVGLALNLR) threads the bilayer.

Belongs to the reaction center PufL/M/PsbA/D family. In terms of assembly, PSII is composed of 1 copy each of membrane proteins PsbA, PsbB, PsbC, PsbD, PsbE, PsbF, PsbH, PsbI, PsbJ, PsbK, PsbL, PsbM, PsbT, PsbX, PsbY, PsbZ, Psb30/Ycf12, at least 3 peripheral proteins of the oxygen-evolving complex and a large number of cofactors. It forms dimeric complexes. The D1/D2 heterodimer binds P680, chlorophylls that are the primary electron donor of PSII, and subsequent electron acceptors. It shares a non-heme iron and each subunit binds pheophytin, quinone, additional chlorophylls, carotenoids and lipids. There is also a Cl(-1) ion associated with D1 and D2, which is required for oxygen evolution. The PSII complex binds additional chlorophylls, carotenoids and specific lipids. is required as a cofactor.

The protein resides in the plastid. It localises to the chloroplast thylakoid membrane. The catalysed reaction is 2 a plastoquinone + 4 hnu + 2 H2O = 2 a plastoquinol + O2. Functionally, photosystem II (PSII) is a light-driven water:plastoquinone oxidoreductase that uses light energy to abstract electrons from H(2)O, generating O(2) and a proton gradient subsequently used for ATP formation. It consists of a core antenna complex that captures photons, and an electron transfer chain that converts photonic excitation into a charge separation. The D1/D2 (PsbA/PsbD) reaction center heterodimer binds P680, the primary electron donor of PSII as well as several subsequent electron acceptors. D2 is needed for assembly of a stable PSII complex. This Saccharum hybrid (Sugarcane) protein is Photosystem II D2 protein.